Reading from the N-terminus, the 441-residue chain is MRPAVAAALLLVAAAVAASPVSALYSAGSPVLQFNPNNFKSKVLNSNGVVLVEFFAPWCGHCQQLTPIWEKAAGVLKGVATVAALDADAHKELAQEYGIRGFPTIKVFVPGKPPVDYQGARDVKPIVEFALSQVKALLRDRLNGKTSAGSGGKKSGGSSEKTEPSASIELNSQNFDKLVTKSKDLWIVEFFAPWCGHCKKLAPEWKKAAKNLKGQVKLGHVDCDAEKSLMSKYKVEGFPTILVFGADKESPFPYQGARVASAIESFALEQLEANAAPPEVSELTGPDAMEEKCASAAICFVSFLPDILDSKAEGRNKYLELLLSVAEKFKKSPYSFVWTAAGKQADLEKQVGVGGYGYPAMVALNVKKGAYAPLRSAFQLDEITEFVKEAGRGGKGNLPLDGTPTIVQSEPWDGKDGEVIEEDEFSLEELMADNSPVNDEL.

An N-terminal signal peptide occupies residues 1-18 (MRPAVAAALLLVAAAVAA). Thioredoxin domains lie at 19 to 139 (SPVS…ALLR) and 159 to 276 (SEKT…ANAA). Active-site nucleophile residues include Cys59 and Cys62. Cys59 and Cys62 are disulfide-bonded. The disordered stretch occupies residues 143 to 166 (NGKTSAGSGGKKSGGSSEKTEPSA). Active-site nucleophile residues include Cys195 and Cys198. A disulfide bridge links Cys195 with Cys198.

The protein belongs to the protein disulfide isomerase family.

It localises to the endoplasmic reticulum lumen. The catalysed reaction is Catalyzes the rearrangement of -S-S- bonds in proteins.. In terms of biological role, acts as a protein-folding catalyst that interacts with nascent polypeptides to catalyze the formation, isomerization, and reduction or oxidation of disulfide bonds. May play a role in storage protein biogenesis. This Oryza sativa subsp. japonica (Rice) protein is Protein disulfide isomerase-like 2-3 (PDIL2-3).